We begin with the raw amino-acid sequence, 121 residues long: MADLNVEIVAVERELWSGPATFVFTRTTAGEIGILPRHIPLVAQLVDDAMVRVEREGEDDLRIAVDGGFLSVTEETVRILVENAQFESEIDADAAKEDAASDDERTAAWGRARLRALGQID.

The protein belongs to the ATPase epsilon chain family. As to quaternary structure, F-type ATPases have 2 components, CF(1) - the catalytic core - and CF(0) - the membrane proton channel. CF(1) has five subunits: alpha(3), beta(3), gamma(1), delta(1), epsilon(1). CF(0) has three main subunits: a, b and c.

The protein localises to the cell membrane. Produces ATP from ADP in the presence of a proton gradient across the membrane. The sequence is that of ATP synthase epsilon chain from Mycolicibacterium smegmatis (strain ATCC 700084 / mc(2)155) (Mycobacterium smegmatis).